Consider the following 102-residue polypeptide: ATP-dependent Clp protease adapter protein ClpS (102 aa).

This sequence belongs to the ClpS family. In terms of assembly, binds to the N-terminal domain of the chaperone ClpA.

Functionally, involved in the modulation of the specificity of the ClpAP-mediated ATP-dependent protein degradation. This is ATP-dependent Clp protease adapter protein ClpS from Dechloromonas aromatica (strain RCB).